We begin with the raw amino-acid sequence, 392 residues long: Multidrug resistance protein MdtL (392 aa).

Transmembrane regions (helical) follow at residues 4-24, 38-58, 70-90, 95-115, 131-151, 158-178, 209-229, 246-266, 270-290, 294-314, 331-351, and 357-377; these read FLLCSFALVLLYPSGIDMYLV, AQLHIAFSVYLAGMASAMLFA, VAIVGAVIFVVASLLCAQAHA, LVGRFIQGIGAGSCYVVAFAI, LLNGITCIIPVLAPVLGHLIM, SLFYTMTGMGVMVGLLSVFIL, ILITTLSVTAILTYVNVSPVL, ALMAMISMAVSFSTPFALSLF, TLMLTSQVLFLAAGLALSLAT, LTLIGLGMICAGFSVGFGVAM, VLGIAQVCGSSLWIWLAAIIG, and MLIGILIACSIVSLVLLLVVT.

Belongs to the major facilitator superfamily. DHA1 family. MdtL (TC 2.A.1.2.22) subfamily.

It localises to the cell inner membrane. The protein is Multidrug resistance protein MdtL of Klebsiella pneumoniae (strain 342).